A 316-amino-acid chain; its full sequence is 4-hydroxy-3-methylbut-2-enyl diphosphate reductase (316 aa).

Cys12 contacts [4Fe-4S] cluster. (2E)-4-hydroxy-3-methylbut-2-enyl diphosphate-binding residues include His43 and His81. Residues His43 and His81 each coordinate dimethylallyl diphosphate. Residues His43 and His81 each coordinate isopentenyl diphosphate. Cys103 contributes to the [4Fe-4S] cluster binding site. His131 is a binding site for (2E)-4-hydroxy-3-methylbut-2-enyl diphosphate. His131 serves as a coordination point for dimethylallyl diphosphate. His131 contacts isopentenyl diphosphate. Glu133 serves as the catalytic Proton donor. (2E)-4-hydroxy-3-methylbut-2-enyl diphosphate is bound at residue Thr170. Residue Cys198 participates in [4Fe-4S] cluster binding. (2E)-4-hydroxy-3-methylbut-2-enyl diphosphate contacts are provided by Ser226, Asn228, and Ser271. 3 residues coordinate dimethylallyl diphosphate: Ser226, Asn228, and Ser271. Isopentenyl diphosphate is bound by residues Ser226, Asn228, and Ser271.

The protein belongs to the IspH family. It depends on [4Fe-4S] cluster as a cofactor.

It catalyses the reaction isopentenyl diphosphate + 2 oxidized [2Fe-2S]-[ferredoxin] + H2O = (2E)-4-hydroxy-3-methylbut-2-enyl diphosphate + 2 reduced [2Fe-2S]-[ferredoxin] + 2 H(+). The enzyme catalyses dimethylallyl diphosphate + 2 oxidized [2Fe-2S]-[ferredoxin] + H2O = (2E)-4-hydroxy-3-methylbut-2-enyl diphosphate + 2 reduced [2Fe-2S]-[ferredoxin] + 2 H(+). It functions in the pathway isoprenoid biosynthesis; dimethylallyl diphosphate biosynthesis; dimethylallyl diphosphate from (2E)-4-hydroxy-3-methylbutenyl diphosphate: step 1/1. It participates in isoprenoid biosynthesis; isopentenyl diphosphate biosynthesis via DXP pathway; isopentenyl diphosphate from 1-deoxy-D-xylulose 5-phosphate: step 6/6. Functionally, catalyzes the conversion of 1-hydroxy-2-methyl-2-(E)-butenyl 4-diphosphate (HMBPP) into a mixture of isopentenyl diphosphate (IPP) and dimethylallyl diphosphate (DMAPP). Acts in the terminal step of the DOXP/MEP pathway for isoprenoid precursor biosynthesis. The protein is 4-hydroxy-3-methylbut-2-enyl diphosphate reductase of Bacillus thuringiensis (strain Al Hakam).